Consider the following 116-residue polypeptide: Small ribosomal subunit protein bS16 (116 aa).

The tract at residues 88–116 (RNNPKAAVPGKRMAELAKKKAERAAASAE) is disordered. Residues 99–110 (RMAELAKKKAER) show a composition bias toward basic and acidic residues.

This sequence belongs to the bacterial ribosomal protein bS16 family.

The chain is Small ribosomal subunit protein bS16 from Cereibacter sphaeroides (strain ATCC 17025 / ATH 2.4.3) (Rhodobacter sphaeroides).